Reading from the N-terminus, the 357-residue chain is Queuosine-tRNA galactosyltransferase (357 aa).

Belongs to the glycosyltransferase 2 family.

The protein localises to the cytoplasm. The enzyme catalyses queuosine(34) in tRNA(Tyr) + UDP-alpha-D-galactose = O-5''-beta-D-galactosylqueuosine(34) in tRNA(Tyr) + UDP + H(+). Its function is as follows. Glycosyltransferase that specifically catalyzes galactosylation of cytoplasmic tRNA(Tyr) modified with queuosine at position 34 (queuosine(34)). Galactosylates the cyclopentene hydroxyl group of queuosine(34) in tRNA(Tyr) to form galactosyl-queuosine(34). Mannosylation of queuosine(34) in tRNA(Tyr) is required to slow-down elongation at cognate codons UAC and suppress stop codon readthrough, thereby regulating protein translation. This Mus musculus (Mouse) protein is Queuosine-tRNA galactosyltransferase.